We begin with the raw amino-acid sequence, 634 residues long: Putative ABC transporter ATP-binding protein MG015 homolog (634 aa).

Transmembrane regions (helical) follow at residues 54–74 (VLYV…NSIL), 111–131 (LTIV…FNVA), 189–209 (VGGQ…ILFV), 213–233 (VIAL…FLFL), 296–316 (VFIY…SISI), and 325–345 (IPSF…IAAL). Residues 54 to 364 (VLYVMVCAIF…IFSLWNLIQL (311 aa)) enclose the ABC transmembrane type-1 domain. Residues 397–631 (IRFEKVVFGY…NGFYARLKRS (235 aa)) enclose the ABC transporter domain. Residue 430-437 (GPTGAGKS) coordinates ATP.

Belongs to the ABC transporter superfamily.

It is found in the cell membrane. This is Putative ABC transporter ATP-binding protein MG015 homolog from Mycoplasma pneumoniae (strain ATCC 29342 / M129 / Subtype 1) (Mycoplasmoides pneumoniae).